A 410-amino-acid polypeptide reads, in one-letter code: Transcription factor rglT (410 aa).

The interval 1-24 (MQFDSLPLPPSSSHDTTSVPPLKR) is disordered. Positions 28 to 55 (CDECRKRKLKCSGEATGCSRCLKQSLPC) form a DNA-binding region, zn(2)-C6 fungal-type. Residues 353–372 (HRTRTVESPNEPGSCSPVSH) form a disordered region. Polar residues predominate over residues 358–369 (VESPNEPGSCSP).

The protein localises to the nucleus. Its function is as follows. Transcription factor that is involved in protection against oxidative stress. Binds to promoter regions of the gliotoxin (GT) biosynthetic genes gliZ, gliF, gliT, gliM, gliA and gtmA. Two related but different DNA motifs (5'-TCGG-3' and 5'-CGGNCGG-3') are specifically enriched among rglT binding sites in GT-inducing conditions. Also indirectly regulates the expression of gliP, gliG, gliH and gliN. Plays a key role in resistance against exogenously-added GT and GT biosynthesis, mainly through the direct regulation of gliT. Furthermore, rglT is important for virulence in chemotherapeutic mice with invasive pulmonary aspergillosis (IPA). The chain is Transcription factor rglT from Aspergillus fumigatus (strain CBS 144.89 / FGSC A1163 / CEA10) (Neosartorya fumigata).